Reading from the N-terminus, the 142-residue chain is Coactosin-like protein (142 aa).

N-acetylalanine is present on Ala-2. One can recognise an ADF-H domain in the interval 2–130 (ATKIDKEACR…EEDFIKSELK (129 aa)). Positions 66–75 (TGDAMSKRSK) are flexible and important for F-actin binding. Lys-102 and Lys-126 each carry N6-acetyllysine.

This sequence belongs to the actin-binding proteins ADF family. Coactosin subfamily. Interacts with 5-lipoxygenase (ALOX5/5LO) in a calcium-independent manner. Binds to F-actin with a stoichiometry of 1:2. In terms of tissue distribution, widely expressed with highest levels in placenta, lung, kidney and peripheral blood leukocytes and lower levels in brain, liver and pancreas.

It is found in the cytoplasm. The protein localises to the cytoskeleton. Its subcellular location is the nucleus. Binds to F-actin in a calcium-independent manner. Has no direct effect on actin depolymerization. Acts as a chaperone for ALOX5 (5LO), influencing both its stability and activity in leukotrienes synthesis. In Homo sapiens (Human), this protein is Coactosin-like protein (COTL1).